The sequence spans 325 residues: UPF0285 protein MmarC7_1666 (325 aa).

The protein belongs to the UPF0285 family.

The sequence is that of UPF0285 protein MmarC7_1666 from Methanococcus maripaludis (strain C7 / ATCC BAA-1331).